We begin with the raw amino-acid sequence, 166 residues long: Thiol peroxidase (166 aa).

Residues 18–164 form the Thioredoxin domain; the sequence is VKVGDKAPNF…YEKAIEAAKA (147 aa). Residue C60 is the Cysteine sulfenic acid (-SOH) intermediate of the active site. Cysteines 60 and 94 form a disulfide.

It belongs to the peroxiredoxin family. Tpx subfamily. As to quaternary structure, homodimer.

The catalysed reaction is a hydroperoxide + [thioredoxin]-dithiol = an alcohol + [thioredoxin]-disulfide + H2O. Functionally, thiol-specific peroxidase that catalyzes the reduction of hydrogen peroxide and organic hydroperoxides to water and alcohols, respectively. Plays a role in cell protection against oxidative stress by detoxifying peroxides. This chain is Thiol peroxidase, found in Halalkalibacterium halodurans (strain ATCC BAA-125 / DSM 18197 / FERM 7344 / JCM 9153 / C-125) (Bacillus halodurans).